We begin with the raw amino-acid sequence, 313 residues long: Dimethyladenosine transferase (313 aa).

Positions 1–22 (MPKIKSAASGRRRERQQQRGQL) are disordered. Positions 37, 39, 64, 85, 113, and 128 each coordinate S-adenosyl-L-methionine.

Belongs to the class I-like SAM-binding methyltransferase superfamily. rRNA adenine N(6)-methyltransferase family. In terms of assembly, part of the small subunit (SSU) processome, composed of more than 70 proteins and the RNA chaperone small nucleolar RNA (snoRNA) U3.

Its subcellular location is the nucleus. It localises to the nucleoplasm. The protein localises to the nucleolus. It carries out the reaction adenosine(1779)/adenosine(1780) in 18S rRNA + 4 S-adenosyl-L-methionine = N(6)-dimethyladenosine(1779)/N(6)-dimethyladenosine(1780) in 18S rRNA + 4 S-adenosyl-L-homocysteine + 4 H(+). Functionally, specifically dimethylates two adjacent adenosines in the loop of a conserved hairpin near the 3'-end of 18S rRNA in the 40S particle. Involved in the pre-rRNA processing steps leading to small-subunit rRNA production independently of its RNA-modifying catalytic activity. Part of the small subunit (SSU) processome, first precursor of the small eukaryotic ribosomal subunit. During the assembly of the SSU processome in the nucleolus, many ribosome biogenesis factors, an RNA chaperone and ribosomal proteins associate with the nascent pre-rRNA and work in concert to generate RNA folding, modifications, rearrangements and cleavage as well as targeted degradation of pre-ribosomal RNA by the RNA exosome. This chain is Dimethyladenosine transferase (DIMT1), found in Bos taurus (Bovine).